The sequence spans 694 residues: Probable metal-nicotianamine transporter YSL8 (694 aa).

Transmembrane regions (helical) follow at residues 38–58 (ITVRSLVVSAVLGTFLSFIVM), 62–82 (LTSGIVPSLNVSAGLLAFFLM), 110–130 (CVISCSSIAFSGGFGTYILGM), 154–174 (LGRLIAFLFLVSFVGLFSIVP), 215–235 (ILFKSFVGSFLWSLFQWFYAA), 265–285 (VGVGMICPYIINFSLLIGSVV), 319–339 (VFISIAMIVGDGLFNFFSIVL), 393–413 (IAAAAYVLLAAISVVAIPHIF), 421–441 (VVWAYVVAPLFAFCNAYGTGL), 467–487 (GGVVAGLAACGLMMGIVSTAS), 506–526 (MFVSQVLGTGMGCIISPMVFW), 567–587 (LRFCLAFFLLAIAICALKEVA), 608–628 (FFLGSFFTIDMCVGSLVLFLW), and 643–663 (VASGLICGDGIWSLPSSILSL).

Belongs to the YSL (TC 2.A.67.2) family. Expressed in root epidermis and exoderm.

It is found in the membrane. Functionally, may be involved in the transport of nicotianamine-chelated metals. The polypeptide is Probable metal-nicotianamine transporter YSL8 (YSL8) (Oryza sativa subsp. japonica (Rice)).